The sequence spans 336 residues: tRNA N6-adenosine threonylcarbamoyltransferase (336 aa).

The Fe cation site is built by H114 and H118. Substrate contacts are provided by residues 136–140, D169, G182, D186, and N275; that span reads LVSGG. D301 contributes to the Fe cation binding site.

The protein belongs to the KAE1 / TsaD family. It depends on Fe(2+) as a cofactor.

The protein localises to the cytoplasm. It carries out the reaction L-threonylcarbamoyladenylate + adenosine(37) in tRNA = N(6)-L-threonylcarbamoyladenosine(37) in tRNA + AMP + H(+). Its function is as follows. Required for the formation of a threonylcarbamoyl group on adenosine at position 37 (t(6)A37) in tRNAs that read codons beginning with adenine. Is involved in the transfer of the threonylcarbamoyl moiety of threonylcarbamoyl-AMP (TC-AMP) to the N6 group of A37, together with TsaE and TsaB. TsaD likely plays a direct catalytic role in this reaction. The polypeptide is tRNA N6-adenosine threonylcarbamoyltransferase (Streptococcus pneumoniae serotype 2 (strain D39 / NCTC 7466)).